The following is a 1616-amino-acid chain: Putative inactive phenolphthiocerol synthesis polyketide synthase type I Pks1 (1616 aa).

Residues 83-397 (TVVVFPGQGA…GQVFTTGVPV (315 aa)) are acyltransferase. The For acyltransferase activity role is filled by S174. Positions 445–567 (HALLGAVVER…GMLGVAAAET (123 aa)) are N-terminal hotdog fold. Residues 445 to 605 (HALLGAVVER…YAYGPAFQGL (161 aa)) are dehydratase. The PKS/mFAS DH domain maps to 445–719 (HALLGAVVER…TRPITAEQLR (275 aa)). H477 functions as the Proton acceptor; for dehydratase activity in the catalytic mechanism. The tract at residues 579-719 (AESVDISDGY…TRPITAEQLR (141 aa)) is C-terminal hotdog fold. The Proton donor; for dehydratase activity role is filled by D640. An enoylreductase region spans residues 910–1215 (GTLEDLVIQP…QARHIGKVVL (306 aa)). NADP(+)-binding positions include 1040–1057 (VLIH…VQLA) and 1229–1244 (TVVI…GVLA). The interval 1228–1409 (GTVVITGATG…SLAWGLWEQP (182 aa)) is beta-ketoacyl reductase. The 76-residue stretch at 1514–1589 (ELLVGLVCLQ…AVAEYVAQQM (76 aa)) folds into the Carrier domain. S1549 carries the post-translational modification O-(pantetheine 4'-phosphoryl)serine. Positions 1588 to 1604 (QMSGSRPTESGDPTSQV) are enriched in polar residues. The disordered stretch occupies residues 1588–1616 (QMSGSRPTESGDPTSQVVEPAAAEVSVHA).

Pantetheine 4'-phosphate serves as cofactor.

The protein operates within lipid metabolism; fatty acid biosynthesis. Its function is as follows. May play a role in phthiocerol biosynthesis. This Mycobacterium tuberculosis (strain ATCC 25618 / H37Rv) protein is Putative inactive phenolphthiocerol synthesis polyketide synthase type I Pks1 (pks1).